Consider the following 354-residue polypeptide: Protein-glutamate methylesterase/protein-glutamine glutaminase (354 aa).

One can recognise a Response regulatory domain in the interval 6-123 (RVLIVDDSAV…SQSLETLSAA (118 aa)). D57 carries the post-translational modification 4-aspartylphosphate. A CheB-type methylesterase domain is found at 159-351 (ARTTHQLLAV…GDLLKQLQTR (193 aa)). Active-site residues include S171, H197, and D293.

Belongs to the CheB family. Post-translationally, phosphorylated by CheA. Phosphorylation of the N-terminal regulatory domain activates the methylesterase activity.

It localises to the cytoplasm. The catalysed reaction is [protein]-L-glutamate 5-O-methyl ester + H2O = L-glutamyl-[protein] + methanol + H(+). It carries out the reaction L-glutaminyl-[protein] + H2O = L-glutamyl-[protein] + NH4(+). Functionally, involved in chemotaxis. Part of a chemotaxis signal transduction system that modulates chemotaxis in response to various stimuli. Catalyzes the demethylation of specific methylglutamate residues introduced into the chemoreceptors (methyl-accepting chemotaxis proteins or MCP) by CheR. Also mediates the irreversible deamidation of specific glutamine residues to glutamic acid. The sequence is that of Protein-glutamate methylesterase/protein-glutamine glutaminase from Bdellovibrio bacteriovorus (strain ATCC 15356 / DSM 50701 / NCIMB 9529 / HD100).